The following is a 624-amino-acid chain: Phosphomethylpyrimidine synthase (624 aa).

Residues 40-61 (VPMRKISQSDTPTNTGREKNPP) are disordered. Polar residues predominate over residues 45-54 (ISQSDTPTNT). Substrate is bound by residues asparagine 229, methionine 258, tyrosine 287, histidine 323, 343–345 (SRG), 384–387 (DGLR), and glutamate 423. Histidine 427 serves as a coordination point for Zn(2+). Tyrosine 450 contributes to the substrate binding site. Position 491 (histidine 491) interacts with Zn(2+). Cysteine 571, cysteine 574, and cysteine 579 together coordinate [4Fe-4S] cluster.

It belongs to the ThiC family. In terms of assembly, homodimer. The cofactor is [4Fe-4S] cluster.

The catalysed reaction is 5-amino-1-(5-phospho-beta-D-ribosyl)imidazole + S-adenosyl-L-methionine = 4-amino-2-methyl-5-(phosphooxymethyl)pyrimidine + CO + 5'-deoxyadenosine + formate + L-methionine + 3 H(+). It functions in the pathway cofactor biosynthesis; thiamine diphosphate biosynthesis. Its function is as follows. Catalyzes the synthesis of the hydroxymethylpyrimidine phosphate (HMP-P) moiety of thiamine from aminoimidazole ribotide (AIR) in a radical S-adenosyl-L-methionine (SAM)-dependent reaction. This Methylococcus capsulatus (strain ATCC 33009 / NCIMB 11132 / Bath) protein is Phosphomethylpyrimidine synthase.